We begin with the raw amino-acid sequence, 218 residues long: Pyridoxal 5'-phosphate synthase subunit PdxT (218 aa).

Residue 54 to 56 coordinates L-glutamine; that stretch reads GES. The Nucleophile role is filled by C86. L-glutamine contacts are provided by residues R120 and 149–150; that span reads IR. Residues H197 and E199 each act as charge relay system in the active site.

It belongs to the glutaminase PdxT/SNO family. As to quaternary structure, in the presence of PdxS, forms a dodecamer of heterodimers. Only shows activity in the heterodimer.

It catalyses the reaction aldehydo-D-ribose 5-phosphate + D-glyceraldehyde 3-phosphate + L-glutamine = pyridoxal 5'-phosphate + L-glutamate + phosphate + 3 H2O + H(+). The enzyme catalyses L-glutamine + H2O = L-glutamate + NH4(+). The protein operates within cofactor biosynthesis; pyridoxal 5'-phosphate biosynthesis. Functionally, catalyzes the hydrolysis of glutamine to glutamate and ammonia as part of the biosynthesis of pyridoxal 5'-phosphate. The resulting ammonia molecule is channeled to the active site of PdxS. The chain is Pyridoxal 5'-phosphate synthase subunit PdxT from Saccharopolyspora erythraea (strain ATCC 11635 / DSM 40517 / JCM 4748 / NBRC 13426 / NCIMB 8594 / NRRL 2338).